A 173-amino-acid chain; its full sequence is Transmembrane protein 240 (173 aa).

Transmembrane regions (helical) follow at residues Ala5–Met25 and Leu90–Val110. Ser169 carries the post-translational modification Phosphoserine.

Its subcellular location is the synapse. The protein resides in the cell membrane. The protein is Transmembrane protein 240 (Tmem240) of Mus musculus (Mouse).